Consider the following 338-residue polypeptide: Large ribosomal subunit protein uL3 (338 aa).

Residues 230-258 (HRKGHRRTGTIGPQAPAVMFTQPRPGQMG) are disordered.

The protein belongs to the universal ribosomal protein uL3 family. As to quaternary structure, part of the 50S ribosomal subunit. Forms a cluster with proteins L14 and L24e.

Its function is as follows. One of the primary rRNA binding proteins, it binds directly near the 3'-end of the 23S rRNA, where it nucleates assembly of the 50S subunit. This is Large ribosomal subunit protein uL3 from Pyrobaculum aerophilum (strain ATCC 51768 / DSM 7523 / JCM 9630 / CIP 104966 / NBRC 100827 / IM2).